The primary structure comprises 881 residues: Envelope glycoprotein gp160 (881 aa).

The N-terminal stretch at methionine 1–glycine 19 is a signal peptide. Over isoleucine 20 to glycine 696 the chain is Extracellular. Asparagine 37 carries N-linked (GlcNAc...) asparagine; by host glycosylation. An intrachain disulfide couples cysteine 44 to cysteine 57. 17 N-linked (GlcNAc...) asparagine; by host glycosylation sites follow: asparagine 70, asparagine 114, asparagine 148, asparagine 158, asparagine 186, asparagine 200, asparagine 204, asparagine 214, asparagine 246, asparagine 249, asparagine 280, asparagine 286, asparagine 297, asparagine 308, asparagine 318, asparagine 373, and asparagine 379. Intrachain disulfides connect cysteine 101–cysteine 222, cysteine 108–cysteine 213, cysteine 113–cysteine 170, cysteine 235–cysteine 265, and cysteine 245–cysteine 257. The segment at cysteine 113–serine 169 is V1. The tract at residues cysteine 170–cysteine 213 is V2. The tract at residues cysteine 313–tryptophan 345 is V3. The cysteines at positions 313 and 346 are disulfide-linked. 2 disulfide bridges follow: cysteine 397-cysteine 461 and cysteine 404-cysteine 434. Positions cysteine 404–cysteine 434 are V4. N-linked (GlcNAc...) asparagine; by host glycosylation is found at asparagine 462 and asparagine 478. A V5 region spans residues glycine 477 to methionine 484. Positions glycine 528 to alanine 548 are fusion peptide. The immunosuppression stretch occupies residues leucine 591–glutamine 607. Residues asparagine 627, asparagine 636, and asparagine 652 are each glycosylated (N-linked (GlcNAc...) asparagine; by host). Residues asparagine 636 to methionine 668 are a coiled coil. Positions lysine 673 to glutamine 694 are MPER; binding to GalCer. The helical transmembrane segment at isoleucine 697 to alanine 717 threads the bilayer. Residues lysine 718 to leucine 881 are Cytoplasmic-facing. Residues tyrosine 723–valine 726 carry the YXXV motif; contains endocytosis signal motif. The disordered stretch occupies residues threonine 737–asparagine 761. Cysteine 789 is lipidated: S-palmitoyl cysteine; by host. Residues leucine 880–leucine 881 carry the Di-leucine internalization motif motif.

In terms of assembly, the mature envelope protein (Env) consists of a homotrimer of non-covalently associated gp120-gp41 heterodimers. The resulting complex protrudes from the virus surface as a spike. Interacts with host CD4 and CCR5. Gp120 also interacts with the C-type lectins CD209/DC-SIGN and CLEC4M/DC-SIGNR (collectively referred to as DC-SIGN(R)). As to quaternary structure, the mature envelope protein (Env) consists of a homotrimer of non-covalently associated gp120-gp41 heterodimers. The resulting complex protrudes from the virus surface as a spike. Specific enzymatic cleavages in vivo yield mature proteins. Envelope glycoproteins are synthesized as an inactive precursor that is heavily N-glycosylated and processed likely by host cell furin in the Golgi to yield the mature SU and TM proteins. The cleavage site between SU and TM requires the minimal sequence [KR]-X-[KR]-R. Post-translationally, palmitoylation of the transmembrane protein and of Env polyprotein (prior to its proteolytic cleavage) is essential for their association with host cell membrane lipid rafts. Palmitoylation is therefore required for envelope trafficking to classical lipid rafts, but not for viral replication.

The protein localises to the virion membrane. The protein resides in the host cell membrane. Its subcellular location is the host endosome membrane. In terms of biological role, the surface protein gp120 (SU) attaches the virus to the host lymphoid cell by binding to the primary receptor CD4. This interaction induces a structural rearrangement creating a high affinity binding site for a chemokine coreceptor like CCR5. This peculiar 2 stage receptor-interaction strategy allows gp120 to maintain the highly conserved coreceptor-binding site in a cryptic conformation, protected from neutralizing antibodies. These changes are transmitted to the transmembrane protein gp41 and are thought to activate its fusogenic potential by unmasking its fusion peptide. Functionally, surface protein gp120 (SU) may target the virus to gut-associated lymphoid tissue (GALT) by binding host ITGA4/ITGB7 (alpha-4/beta-7 integrins), a complex that mediates T-cell migration to the GALT. Interaction between gp120 and ITGA4/ITGB7 would allow the virus to enter GALT early in the infection, infecting and killing most of GALT's resting CD4+ T-cells. This T-cell depletion is believed to be the major insult to the host immune system leading to AIDS. The surface protein gp120 is a ligand for CD209/DC-SIGN and CLEC4M/DC-SIGNR, which are respectively found on dendritic cells (DCs), and on endothelial cells of liver sinusoids and lymph node sinuses. These interactions allow capture of viral particles at mucosal surfaces by these cells and subsequent transmission to permissive cells. DCs are professional antigen presenting cells, critical for host immunity by inducing specific immune responses against a broad variety of pathogens. They act as sentinels in various tissues where they take up antigen, process it, and present it to T-cells following migration to lymphoid organs. SIV subverts the migration properties of dendritic cells to gain access to CD4+ T-cells in lymph nodes. Virus transmission to permissive T-cells occurs either in trans (without DCs infection, through viral capture and transmission), or in cis (following DCs productive infection, through the usual CD4-gp120 interaction), thereby inducing a robust infection. In trans infection, bound virions remain infectious over days and it is proposed that they are not degraded, but protected in non-lysosomal acidic organelles within the DCs close to the cell membrane thus contributing to the viral infectious potential during DCs' migration from the periphery to the lymphoid tissues. On arrival at lymphoid tissues, intact virions recycle back to DCs' cell surface allowing virus transmission to CD4+ T-cells. Virion capture also seems to lead to MHC-II-restricted viral antigen presentation, and probably to the activation of SIV-specific CD4+ cells. Its function is as follows. The transmembrane protein gp41 (TM) acts as a class I viral fusion protein. Under the current model, the protein has at least 3 conformational states: pre-fusion native state, pre-hairpin intermediate state, and post-fusion hairpin state. During fusion of viral and target intracellular membranes, the coiled coil regions (heptad repeats) assume a trimer-of-hairpins structure, positioning the fusion peptide in close proximity to the C-terminal region of the ectodomain. The formation of this structure appears to drive apposition and subsequent fusion of viral and target cell membranes. Complete fusion occurs in host cell endosomes. The virus undergoes clathrin-dependent internalization long before endosomal fusion, thus minimizing the surface exposure of conserved viral epitopes during fusion and reducing the efficacy of inhibitors targeting these epitopes. Membranes fusion leads to delivery of the nucleocapsid into the cytoplasm. In terms of biological role, the envelope glycoprotein gp160 precursor down-modulates cell surface CD4 antigen by interacting with it in the endoplasmic reticulum and blocking its transport to the cell surface. Functionally, the gp120-gp41 heterodimer allows rapid transcytosis of the virus through CD4 negative cells such as simple epithelial monolayers of the intestinal, rectal and endocervical epithelial barriers. Both gp120 and gp41 specifically recognize glycosphingolipids galactosyl-ceramide (GalCer) or 3' sulfo-galactosyl-ceramide (GalS) present in the lipid rafts structures of epithelial cells. Binding to these alternative receptors allows the rapid transcytosis of the virus through the epithelial cells. This transcytotic vesicle-mediated transport of virions from the apical side to the basolateral side of the epithelial cells does not involve infection of the cells themselves. This chain is Envelope glycoprotein gp160 (env), found in Simian immunodeficiency virus (isolate K6W) (SIV-mac).